Consider the following 90-residue polypeptide: Probable Fe(2+)-trafficking protein (90 aa).

The protein belongs to the Fe(2+)-trafficking protein family.

Its function is as follows. Could be a mediator in iron transactions between iron acquisition and iron-requiring processes, such as synthesis and/or repair of Fe-S clusters in biosynthetic enzymes. The polypeptide is Probable Fe(2+)-trafficking protein (Aliivibrio fischeri (strain ATCC 700601 / ES114) (Vibrio fischeri)).